An 84-amino-acid polypeptide reads, in one-letter code: Toxin Tst1 (84 aa).

The N-terminal stretch at 1 to 19 is a signal peptide; sequence MKGMILFISCLLLIDIVVG. The LCN-type CS-alpha/beta domain occupies 21–82; the sequence is KEGYLMDHEG…VWDRATNKCG (62 aa). 4 cysteine pairs are disulfide-bonded: Cys-31–Cys-81, Cys-35–Cys-57, Cys-43–Cys-62, and Cys-47–Cys-64. Position 81 is a cysteine amide (Cys-81).

As to expression, expressed by the venom gland.

Its subcellular location is the secreted. In terms of biological role, beta toxins bind voltage-independently at site-4 of sodium channels (Nav) and shift the voltage of activation toward more negative potentials thereby affecting sodium channel activation and promoting spontaneous and repetitive firing. This toxin is active only on mammals. Is toxic to mice. This chain is Toxin Tst1, found in Tityus stigmurus (Brazilian scorpion).